The primary structure comprises 479 residues: Ribosomal protein uS12 methylthiotransferase RimO (479 aa).

Residues 1 to 34 are disordered; that stretch reads MTVNTFDPSKASPVTHASDSASKTPEPNAVAAPS. Residues 15–25 show a composition bias toward polar residues; sequence THASDSASKTP. Residues 39–151 enclose the MTTase N-terminal domain; it reads NRVGFVSLGC…VMGAVHGYIP (113 aa). Positions 48, 84, 113, 184, 188, and 191 each coordinate [4Fe-4S] cluster. In terms of domain architecture, Radical SAM core spans 170–407; it reads LTPRHYAYLK…METQQAISAA (238 aa). The TRAM domain maps to 410 to 476; the sequence is KQKVGYEMDV…DYDLTGIAVE (67 aa).

Belongs to the methylthiotransferase family. RimO subfamily. [4Fe-4S] cluster serves as cofactor.

It is found in the cytoplasm. The catalysed reaction is L-aspartate(89)-[ribosomal protein uS12]-hydrogen + (sulfur carrier)-SH + AH2 + 2 S-adenosyl-L-methionine = 3-methylsulfanyl-L-aspartate(89)-[ribosomal protein uS12]-hydrogen + (sulfur carrier)-H + 5'-deoxyadenosine + L-methionine + A + S-adenosyl-L-homocysteine + 2 H(+). Functionally, catalyzes the methylthiolation of an aspartic acid residue of ribosomal protein uS12. In Saccharophagus degradans (strain 2-40 / ATCC 43961 / DSM 17024), this protein is Ribosomal protein uS12 methylthiotransferase RimO.